Reading from the N-terminus, the 233-residue chain is 3-dehydroquinate dehydratase (233 aa).

3-dehydroquinate contacts are provided by residues 39 to 41 (EIR) and R73. H132 functions as the Proton donor/acceptor in the catalytic mechanism. K159 acts as the Schiff-base intermediate with substrate in catalysis. 3-dehydroquinate contacts are provided by R196 and Q219.

Belongs to the type-I 3-dehydroquinase family. As to quaternary structure, homodimer.

It catalyses the reaction 3-dehydroquinate = 3-dehydroshikimate + H2O. It participates in metabolic intermediate biosynthesis; chorismate biosynthesis; chorismate from D-erythrose 4-phosphate and phosphoenolpyruvate: step 3/7. Its function is as follows. Involved in the third step of the chorismate pathway, which leads to the biosynthesis of aromatic amino acids. Catalyzes the cis-dehydration of 3-dehydroquinate (DHQ) and introduces the first double bond of the aromatic ring to yield 3-dehydroshikimate. The chain is 3-dehydroquinate dehydratase from Methanococcoides burtonii (strain DSM 6242 / NBRC 107633 / OCM 468 / ACE-M).